Here is a 335-residue protein sequence, read N- to C-terminus: Polyprenol dehydrogenase (335 aa).

4 residues coordinate NAD(+): isoleucine 55, tyrosine 208, lysine 212, and threonine 245. Residue tyrosine 208 is the Proton acceptor of the active site.

It belongs to the short-chain dehydrogenases/reductases (SDR) family.

The protein resides in the lipid droplet. The protein localises to the secreted. It catalyses the reaction a di-trans,poly-cis-polyprenol + NAD(+) = a di-trans,poly-cis-polyprenal + NADH + H(+). It carries out the reaction a di-trans,poly-cis-polyprenol + NADP(+) = a di-trans,poly-cis-polyprenal + NADPH + H(+). The enzyme catalyses a di-trans,poly-cis-dolichol + NADP(+) = a di-trans,poly-cis-dolichal + NADPH + H(+). The catalysed reaction is a di-trans,poly-cis-dolichol + NAD(+) = a di-trans,poly-cis-dolichal + NADH + H(+). It functions in the pathway protein modification; protein glycosylation. Its function is as follows. Oxidoreductase that plays a key role in early steps of protein N-linked glycosylation by mediating two non-consecutive steps in dolichol biosynthesis. Acts both as a NAD(+)-dependent dehydrogenase and as a NADPH-dependent reductase during the conversion of polyprenol into dolichol. First catalyzes the NAD(+)-dependent dehydrogenation of polyprenol into polyprenal; polyprenal is then reduced into dolichal by SRD5A3. It then catalyzes the NADPH-dependent reduction of dolichal into dolichol. May also acts as a positive regulator of starvation-induced autophagy. In Mus musculus (Mouse), this protein is Polyprenol dehydrogenase (Dhrsx).